The chain runs to 388 residues: Galactokinase (388 aa).

A substrate-binding site is contributed by 33-36 (EHTD). Residues serine 67 and 125–131 (GAGLSSS) contribute to the ATP site. Serine 131 and glutamate 163 together coordinate Mg(2+). Aspartate 175 acts as the Proton acceptor in catalysis. Tyrosine 225 lines the substrate pocket.

This sequence belongs to the GHMP kinase family. GalK subfamily.

It is found in the cytoplasm. The catalysed reaction is alpha-D-galactose + ATP = alpha-D-galactose 1-phosphate + ADP + H(+). The protein operates within carbohydrate metabolism; galactose metabolism. Its function is as follows. Catalyzes the transfer of the gamma-phosphate of ATP to D-galactose to form alpha-D-galactose-1-phosphate (Gal-1-P). This chain is Galactokinase, found in Limosilactobacillus fermentum (strain NBRC 3956 / LMG 18251) (Lactobacillus fermentum).